The chain runs to 347 residues: Autoinducer 2 import system permease protein LsrC (347 aa).

9 helical membrane passes run 14–34 (LLAI…YLSV), 39–59 (MVFS…MVML), 72–92 (GMCA…PVAC), 93–113 (LATL…VAWL), 115–135 (IPAI…MLLW), 155–175 (VFLG…LMAW), 213–233 (LNGG…GFIP), 249–269 (VLGG…ILGA), and 284–304 (IPAW…LVFD).

The protein belongs to the binding-protein-dependent transport system permease family. AraH/RbsC subfamily. As to quaternary structure, the complex is composed of two ATP-binding proteins (LsrA), two transmembrane proteins (LsrC and LsrD) and a solute-binding protein (LsrB).

The protein resides in the cell inner membrane. Its function is as follows. Part of the ABC transporter complex LsrABCD involved in autoinducer 2 (AI-2) import. Probably responsible for the translocation of the substrate across the membrane. In Salmonella paratyphi A (strain ATCC 9150 / SARB42), this protein is Autoinducer 2 import system permease protein LsrC (lsrC).